The chain runs to 138 residues: Large ribosomal subunit protein uL29 (138 aa).

Residues 1 to 79 (MAKSKMLDLR…TNKVIKADYN (79 aa)) are large ribosomal subunit protein uL29. The segment at 80 to 138 (KAVEEAEKAGKEVRAKQRKFLEEQYGQQSQTKVNEADIQKAMQAAEQETVEPDTKGETK) is unknown. Residues 103–138 (QYGQQSQTKVNEADIQKAMQAAEQETVEPDTKGETK) form a disordered region.

It belongs to the universal ribosomal protein uL29 family.

The protein is Large ribosomal subunit protein uL29 of Mycoplasma capricolum subsp. capricolum (strain California kid / ATCC 27343 / NCTC 10154).